Here is a 332-residue protein sequence, read N- to C-terminus: 2,3-diketo-L-gulonate reductase (332 aa).

The active-site Proton donor is His44. NAD(+) contacts are provided by residues 168 to 174, 224 to 225, and 304 to 306; these read ITMVDMS, WK, and GHE.

The protein belongs to the LDH2/MDH2 oxidoreductase family. DlgD subfamily. Homodimer.

It localises to the cytoplasm. The enzyme catalyses 3-dehydro-L-gulonate + NAD(+) = 2,3-dioxo-L-gulonate + NADH + H(+). It carries out the reaction 3-dehydro-L-gulonate + NADP(+) = 2,3-dioxo-L-gulonate + NADPH + H(+). Catalyzes the reduction of 2,3-diketo-L-gulonate in the presence of NADH, to form 3-keto-L-gulonate. In Salmonella typhimurium (strain LT2 / SGSC1412 / ATCC 700720), this protein is 2,3-diketo-L-gulonate reductase.